Consider the following 184-residue polypeptide: Dual specificity protein phosphatase 22 (184 aa).

Residue Gly-2 is the site of N-myristoyl glycine attachment. The Tyrosine-protein phosphatase domain maps to 4-144 (GMSQILPGLY…LQEFEKHEVH (141 aa)). Cys-88 acts as the Phosphocysteine intermediate in catalysis. Positions 89, 90, 92, 93, and 94 each coordinate a protein.

Belongs to the protein-tyrosine phosphatase family. Non-receptor class dual specificity subfamily. As to quaternary structure, monomer. Interacts with LCK; the interaction is direct. Interacts with UBR2; the interaction is direct. Post-translationally, myristoylation regulates subcellular location, and is necessary for activation of JNK.

The protein localises to the cytoplasm. The enzyme catalyses O-phospho-L-tyrosyl-[protein] + H2O = L-tyrosyl-[protein] + phosphate. It carries out the reaction O-phospho-L-seryl-[protein] + H2O = L-seryl-[protein] + phosphate. It catalyses the reaction O-phospho-L-threonyl-[protein] + H2O = L-threonyl-[protein] + phosphate. Its function is as follows. Dual specificity phosphatase; can dephosphorylate both phosphotyrosine and phosphoserine or phosphothreonine residues. Activates the JNK signaling pathway. Inhibits T-cell receptor signaling and T-cell mediated immune responses, acting, at least in part, by inducing degradation of E3 ubiquitin ligase UBR2. Dephosphorylates and thereby induces 'Lys-48'-linked ubiquitination of UBR2, leading to proteasomal degradation of UBR2. Dephosphorylates and thereby inactivates tyrosine kinase LCK. Inhibits UBR2-mediated 'Lys-63'-linked ubiquitination of LCK. May play a role in B-cell receptor (BCR) signaling and B-cell function. The protein is Dual specificity protein phosphatase 22 (Dusp22) of Mus musculus (Mouse).